The chain runs to 310 residues: Proline iminopeptidase (310 aa).

The AB hydrolase-1 domain maps to 41–288; that stretch reads LVTLHGGPGG…NSSHMAMWEE (248 aa). Residue serine 116 is the Nucleophile of the active site. Aspartate 255 is an active-site residue. Histidine 282 (proton donor) is an active-site residue.

It belongs to the peptidase S33 family. In terms of assembly, part of the tricorn proteolytic complex.

The enzyme catalyses Release of N-terminal proline from a peptide.. Functionally, cleaves H-Pro-AMC as well as a wide spectrum of amino acid substrates and several peptide substrates without a proline at the N-terminus. In conjunction with the three factors F1, F2 and F3, Tricorn degrades oligopeptides in a sequential manner, yielding free amino acids. The sequence is that of Proline iminopeptidase (pip) from Saccharolobus solfataricus (strain ATCC 35092 / DSM 1617 / JCM 11322 / P2) (Sulfolobus solfataricus).